A 214-amino-acid chain; its full sequence is Probable septum site-determining protein MinC (214 aa).

Belongs to the MinC family. Interacts with MinD and FtsZ.

Cell division inhibitor that blocks the formation of polar Z ring septums. Rapidly oscillates between the poles of the cell to destabilize FtsZ filaments that have formed before they mature into polar Z rings. Prevents FtsZ polymerization. This is Probable septum site-determining protein MinC from Thermoanaerobacter pseudethanolicus (strain ATCC 33223 / 39E) (Clostridium thermohydrosulfuricum).